We begin with the raw amino-acid sequence, 63 residues long: Beta-defensin 4 (63 aa).

A signal peptide spans Met1–Thr22. Gln23 bears the Pyrrolidone carboxylic acid mark. Disulfide bonds link Cys31/Cys59, Cys38/Cys52, and Cys42/Cys60.

It belongs to the beta-defensin family. As to expression, highly expressed in lung.

Its subcellular location is the secreted. In terms of biological role, exhibits antimicrobial activity against Gram-negative bacteria and Gram-positive bacteria. May act as a ligand for C-C chemokine receptor CCR6. Binds to CCR6 and induces chemotactic activity of CCR6-expressing cells. In Rattus norvegicus (Rat), this protein is Beta-defensin 4 (Defb4).